We begin with the raw amino-acid sequence, 64 residues long: Large ribosomal subunit protein bL35 (64 aa).

It belongs to the bacterial ribosomal protein bL35 family.

The sequence is that of Large ribosomal subunit protein bL35 from Helicobacter hepaticus (strain ATCC 51449 / 3B1).